A 465-amino-acid chain; its full sequence is Interferon-inducible GTPase 5 (465 aa).

The 183-residue stretch at 53 to 235 (TRLEVGVTGE…PLLMSTWERD (183 aa)) folds into the IRG-type G domain. Residues 62 to 69 (ESGAGKSS), 87 to 91 (TGVVE), 169 to 171 (KVD), and 216 to 218 (SNL) each bind GTP. Residues Ser247 and Ser304 each carry the phosphoserine modification. Positions 405–438 (EEEEDTQPDVSLEAAGDNGVEKRGSGEGSMEEAP) are disordered.

Belongs to the TRAFAC class dynamin-like GTPase superfamily. IRG family.

The protein localises to the cell projection. It localises to the cilium. It is found in the flagellum. The protein resides in the lipid droplet. It catalyses the reaction GTP + H2O = GDP + phosphate + H(+). Functionally, required for sperm motility and therefore male fertility, via positive regulation of spermatozoa fibrous sheath formation. This chain is Interferon-inducible GTPase 5 (IRGC), found in Bos taurus (Bovine).